Here is a 210-residue protein sequence, read N- to C-terminus: Scoloptoxin SSD976 (210 aa).

The N-terminal stretch at Met1 to Gly23 is a signal peptide.

Contains 3 disulfide bonds. As to expression, expressed by the venom gland.

The protein resides in the secreted. In terms of biological role, voltage-gated calcium channel inhibitor. This chain is Scoloptoxin SSD976, found in Scolopendra dehaani (Thai centipede).